Here is a 181-residue protein sequence, read N- to C-terminus: Putative manganese efflux pump MntP (181 aa).

Helical transmembrane passes span 4-24 (VVLLALALSMDAFAVSIGLGA), 31-51 (VVLGLKAALYFGVFQALMPLI), 59-79 (MLGWLASFAPWVAAGLLALIA), 102-122 (VLLLLAIATSIDALAAGFALT), 129-149 (LVSCALIGVITAIFSFAGVFI), and 161-181 (AELAGGLVLLLIALKIIAVAV).

The protein belongs to the MntP (TC 9.B.29) family.

The protein localises to the cell inner membrane. Probably functions as a manganese efflux pump. This Saccharophagus degradans (strain 2-40 / ATCC 43961 / DSM 17024) protein is Putative manganese efflux pump MntP.